Here is a 423-residue protein sequence, read N- to C-terminus: AUGMIN subunit 4 (423 aa).

A coiled-coil region spans residues 267–287; sequence IEEIERDEAALREDLYSADRK.

The protein belongs to the HAUS4 family. In terms of assembly, part of the augmin complex composed of 8 subunits. The complex acts on microtubules and interacts with gamma-tubulin in spindles and the phragmoplast.

Its subcellular location is the cytoplasm. The protein localises to the cytoskeleton. It localises to the spindle. The protein resides in the phragmoplast. In terms of biological role, involved in microtubules reorganization during spindle and phragmoplast development. The polypeptide is AUGMIN subunit 4 (AUG4) (Arabidopsis thaliana (Mouse-ear cress)).